We begin with the raw amino-acid sequence, 617 residues long: Dihydroxy-acid dehydratase (617 aa).

D81 lines the Mg(2+) pocket. C122 contacts [2Fe-2S] cluster. Mg(2+) is bound by residues D123 and K124. The residue at position 124 (K124) is an N6-carboxylysine. C195 is a [2Fe-2S] cluster binding site. Residue E491 coordinates Mg(2+). Catalysis depends on S517, which acts as the Proton acceptor.

Belongs to the IlvD/Edd family. Homodimer. Requires [2Fe-2S] cluster as cofactor. The cofactor is Mg(2+).

It catalyses the reaction (2R)-2,3-dihydroxy-3-methylbutanoate = 3-methyl-2-oxobutanoate + H2O. The catalysed reaction is (2R,3R)-2,3-dihydroxy-3-methylpentanoate = (S)-3-methyl-2-oxopentanoate + H2O. The protein operates within amino-acid biosynthesis; L-isoleucine biosynthesis; L-isoleucine from 2-oxobutanoate: step 3/4. Its pathway is amino-acid biosynthesis; L-valine biosynthesis; L-valine from pyruvate: step 3/4. Functions in the biosynthesis of branched-chain amino acids. Catalyzes the dehydration of (2R,3R)-2,3-dihydroxy-3-methylpentanoate (2,3-dihydroxy-3-methylvalerate) into 2-oxo-3-methylpentanoate (2-oxo-3-methylvalerate) and of (2R)-2,3-dihydroxy-3-methylbutanoate (2,3-dihydroxyisovalerate) into 2-oxo-3-methylbutanoate (2-oxoisovalerate), the penultimate precursor to L-isoleucine and L-valine, respectively. The sequence is that of Dihydroxy-acid dehydratase from Caulobacter vibrioides (strain ATCC 19089 / CIP 103742 / CB 15) (Caulobacter crescentus).